A 954-amino-acid polypeptide reads, in one-letter code: Bifunctional endo-1,4-beta-xylanase XylA (954 aa).

A signal peptide (or 28, or 29) is located at residues 1–27 (MKLSKIKKVLSGTVSALMIASAAPVVA). The 208-residue stretch at 29–236 (AADQQTRGNV…SNGSANVKSV (208 aa)) folds into the GH11 domain. The active-site Nucleophile is Glu122. The Proton donor role is filled by Glu223. Over residues 233–243 (VKSVSVTQGGS) the composition is skewed to polar residues. The disordered stretch occupies residues 233–628 (VKSVSVTQGG…NNNNSAGSSD (396 aa)). Residues 246–622 (NGGQQQNNDW…WNQGQQNNNN (377 aa)) show a composition bias toward low complexity. The region spanning 624–952 (AGSSDSLKGA…KPAYDRVMAL (329 aa)) is the GH10 domain. Glu774 functions as the Proton donor in the catalytic mechanism. The active-site Nucleophile is Glu884.

In the N-terminal section; belongs to the glycosyl hydrolase 11 (cellulase G) family. It in the C-terminal section; belongs to the glycosyl hydrolase 10 (cellulase F) family.

It catalyses the reaction Endohydrolysis of (1-&gt;4)-beta-D-xylosidic linkages in xylans.. It participates in glycan degradation; xylan degradation. Functionally, xylanase domain releases more xylo-oligosaccharides and GH10 domain more xylose. This Ruminococcus flavefaciens protein is Bifunctional endo-1,4-beta-xylanase XylA (xynA).